Reading from the N-terminus, the 556-residue chain is 2-isopropylmalate synthase (556 aa).

The region spanning P33 to D307 is the Pyruvate carboxyltransferase domain. 4 residues coordinate Mg(2+): D42, H246, H248, and N282. Residues A439 to A556 form a regulatory domain region.

Belongs to the alpha-IPM synthase/homocitrate synthase family. LeuA type 2 subfamily. In terms of assembly, homodimer. Mg(2+) serves as cofactor.

Its subcellular location is the cytoplasm. It catalyses the reaction 3-methyl-2-oxobutanoate + acetyl-CoA + H2O = (2S)-2-isopropylmalate + CoA + H(+). It functions in the pathway amino-acid biosynthesis; L-leucine biosynthesis; L-leucine from 3-methyl-2-oxobutanoate: step 1/4. In terms of biological role, catalyzes the condensation of the acetyl group of acetyl-CoA with 3-methyl-2-oxobutanoate (2-ketoisovalerate) to form 3-carboxy-3-hydroxy-4-methylpentanoate (2-isopropylmalate). The chain is 2-isopropylmalate synthase from Ectopseudomonas mendocina (strain ymp) (Pseudomonas mendocina).